The following is a 440-amino-acid chain: Chromosomal replication initiator protein DnaA (440 aa).

Residues 1–74 (MNPSQILENL…VQSGNKAIIN (74 aa)) form a domain I, interacts with DnaA modulators region. A domain II region spans residues 74–99 (NIQAQSTKQSNKSTKIDIAHIQAQST). The segment at 100-316 (ILNPSFTFES…GIIISLNAYA (217 aa)) is domain III, AAA+ region. Glycine 146, glycine 148, lysine 149, and threonine 150 together coordinate ATP. The domain IV, binds dsDNA stretch occupies residues 317–440 (TILGQEITLE…KNKILIKSQS (124 aa)).

This sequence belongs to the DnaA family. Oligomerizes as a right-handed, spiral filament on DNA at oriC.

It is found in the cytoplasm. In terms of biological role, plays an essential role in the initiation and regulation of chromosomal replication. ATP-DnaA binds to the origin of replication (oriC) to initiate formation of the DNA replication initiation complex once per cell cycle. Binds the DnaA box (a 9 base pair repeat at the origin) and separates the double-stranded (ds)DNA. Forms a right-handed helical filament on oriC DNA; dsDNA binds to the exterior of the filament while single-stranded (ss)DNA is stabiized in the filament's interior. The ATP-DnaA-oriC complex binds and stabilizes one strand of the AT-rich DNA unwinding element (DUE), permitting loading of DNA polymerase. After initiation quickly degrades to an ADP-DnaA complex that is not apt for DNA replication. Binds acidic phospholipids. In Campylobacter jejuni subsp. doylei (strain ATCC BAA-1458 / RM4099 / 269.97), this protein is Chromosomal replication initiator protein DnaA.